Reading from the N-terminus, the 440-residue chain is Argininosuccinate lyase (440 aa).

This sequence belongs to the lyase 1 family. Argininosuccinate lyase subfamily.

The protein resides in the cytoplasm. It carries out the reaction 2-(N(omega)-L-arginino)succinate = fumarate + L-arginine. It functions in the pathway amino-acid biosynthesis; L-arginine biosynthesis; L-arginine from L-ornithine and carbamoyl phosphate: step 3/3. The chain is Argininosuccinate lyase from Clostridium botulinum (strain Langeland / NCTC 10281 / Type F).